Here is an 884-residue protein sequence, read N- to C-terminus: Nonsense-mediated mRNA decay factor EBS1 (884 aa).

Disordered regions lie at residues 596-645 (NSMK…PTMG) and 755-774 (QGGL…NSAY). Residues 633–645 (RSSSLDSFSPTMG) show a composition bias toward polar residues. Positions 760 to 772 (SSQQPSSMSSLNS) are enriched in low complexity.

The protein belongs to the EST1 family. Interacts with NMD helicase UPF1. Interacts with CDC33.

Its subcellular location is the nucleus. It localises to the chromosome. It is found in the telomere. The protein resides in the cytoplasm. The protein localises to the P-body. Its function is as follows. Plays a role in nonsense-mediated mRNA decay (NMD). Recruits UPF1 to cytoplasmic mRNA decay bodies (P-bodies). Negative regulator of gene expression. Inhibits translation most likely through effects on eIF-4E (CDC33). Involved in telomere maintenance. In Saccharomyces cerevisiae (strain ATCC 204508 / S288c) (Baker's yeast), this protein is Nonsense-mediated mRNA decay factor EBS1.